We begin with the raw amino-acid sequence, 1489 residues long: Type-2 histone deacetylase 1 (1489 aa).

4 stretches are compositionally biased toward low complexity: residues 135–163 (NNNN…SPSG), 190–259 (SNGN…SRNL), 281–306 (NIIN…TSTT), and 325–399 (SPTS…NINN). 5 disordered regions span residues 135-259 (NNNN…SRNL), 281-556 (NIIN…NYQQ), 915-935 (NNNN…DDQL), 955-1024 (NISK…RDRD), and 1151-1185 (STGI…GEQC). The span at 400–430 (VANGTPRPSLQTSRLQGKLPSPQQYNTSPSH) shows a compositional bias: polar residues. Composition is skewed to low complexity over residues 431–450 (QQYP…PIQS), 486–553 (NNNN…NNSN), 915–928 (NNNN…NNNN), and 959–988 (NNNN…NNNN). Basic and acidic residues-rich tracts occupy residues 989–1001 (RNRD…ERDN) and 1010–1024 (IEKE…RDRD). Positions 1158–1180 (STSTPITTTGTATVTPGSTTSST) are enriched in low complexity. Histidine 1232 serves as the catalytic Proton acceptor. The span at 1325-1335 (EQNDYDDDDNN) shows a compositional bias: acidic residues. Positions 1325-1374 (EQNDYDDDDNNNDVNNNNNNNNNNNNNNNNNNNNKNNNNNNSNSITQQST) are disordered. The segment covering 1336–1367 (NDVNNNNNNNNNNNNNNNNNNNNKNNNNNNSN) has biased composition (low complexity).

Belongs to the histone deacetylase family. HD type 2 subfamily.

It is found in the nucleus. The protein localises to the cytoplasm. The catalysed reaction is N(6)-acetyl-L-lysyl-[histone] + H2O = L-lysyl-[histone] + acetate. Functionally, responsible for the deacetylation of lysine residues on the N-terminal part of the core histones (H2A, H2B, H3 and H4). Histone deacetylation plays an important role in transcriptional regulation, cell cycle progression and developmental events. Histone deacetylases act via the formation of large multiprotein complexes. This Dictyostelium discoideum (Social amoeba) protein is Type-2 histone deacetylase 1 (hdaD).